Here is a 152-residue protein sequence, read N- to C-terminus: Ribosome maturation factor RimP (152 aa).

This sequence belongs to the RimP family.

The protein resides in the cytoplasm. Required for maturation of 30S ribosomal subunits. In Fervidobacterium nodosum (strain ATCC 35602 / DSM 5306 / Rt17-B1), this protein is Ribosome maturation factor RimP.